The following is a 556-amino-acid chain: MKSDIEIAQSVALQPITDIVKKVGIDGDDIELYGKYKAKLSFEKMKAVEANEPGKLILVTAINPTPAGEGKSTMSIGLADALNQMGKKTMLALREPSLGPVMGIKGGAAGGGYAQVLPMEDINLHFTGDMHAITTANNALSALIDNHLQQGNDLGIDPRRIIWKRVLDLNDRALRQVIVGLGSPVNGVPREDGFDITVASEIMAILCLATDLKDLKKRLADIVVAYTYDRKPVYVRDLKVEGALTLILKDAIKPNLVQTIYGTPALIHGGPFANIAHGCNSVLATSTALRLADYTVTEAGFGADLGAEKFLNIKVPNLPKAPDAIVIVATLRALKMHGGVAKSDLAAENCEAVRLGFANLKRHVENMRQFKVPVVVAINEFVADTEAEIATLKALCEEIKVPVELASVWANGAEGGIALAKTVVRVIDQEAADYKRLYSDEDTLEEKVINIVTQIYDGKAVQFGPKAKTQLKQFAEFGWDKLPVCMAKTQYSFSDNPSLLGAPTDFDITIREFVPKTGAGFIVGLTGDVMTMPGLPKVPAAMAMDVAENGTALGLF.

Thr65–Ser72 contacts ATP.

It belongs to the formate--tetrahydrofolate ligase family.

It catalyses the reaction (6S)-5,6,7,8-tetrahydrofolate + formate + ATP = (6R)-10-formyltetrahydrofolate + ADP + phosphate. It functions in the pathway one-carbon metabolism; tetrahydrofolate interconversion. The sequence is that of Formate--tetrahydrofolate ligase 1 from Streptococcus pyogenes serotype M4 (strain MGAS10750).